Reading from the N-terminus, the 197-residue chain is Protein SYM1 (197 aa).

Helical transmembrane passes span 20-40 (AIMT…LFPT), 55-75 (AVIY…KILN), 97-117 (VDQL…MSIM), and 137-157 (LLTN…VVPL).

The protein belongs to the peroxisomal membrane protein PXMP2/4 family.

The protein resides in the mitochondrion inner membrane. May be involved in cellular response to stress. Required to maintain mitochondrial DNA (mtDNA) integrity and stability. Required for ethanol metabolism and tolerance during heat shock. This is Protein SYM1 (SYM1) from Saccharomyces cerevisiae (strain ATCC 204508 / S288c) (Baker's yeast).